A 561-amino-acid polypeptide reads, in one-letter code: Asparagine synthetase [glutamine-hydrolyzing] (561 aa).

Catalysis depends on cysteine 2, which acts as the For GATase activity. The Glutamine amidotransferase type-2 domain occupies 2 to 191 (CGIWALFGSD…PGHYEVLDLK (190 aa)). Residues 49–53 (RLAVV), 75–77 (NGE), and aspartate 97 each bind L-glutamine. Residues 213-536 (HALYDGVEKL…PGRADWLPHY (324 aa)) enclose the Asparagine synthetase domain. Residues leucine 256, isoleucine 288, and 363–364 (SG) each bind ATP. An N6-acetyllysine modification is found at lysine 385. Position 545 is a phosphothreonine (threonine 545).

The catalysed reaction is L-aspartate + L-glutamine + ATP + H2O = L-asparagine + L-glutamate + AMP + diphosphate + H(+). It participates in amino-acid biosynthesis; L-asparagine biosynthesis; L-asparagine from L-aspartate (L-Gln route): step 1/1. The sequence is that of Asparagine synthetase [glutamine-hydrolyzing] (ASNS) from Bos taurus (Bovine).